We begin with the raw amino-acid sequence, 297 residues long: ATP phosphoribosyltransferase (297 aa).

It belongs to the ATP phosphoribosyltransferase family.

It localises to the cytoplasm. It carries out the reaction 1-(5-phospho-beta-D-ribosyl)-ATP + diphosphate = 5-phospho-alpha-D-ribose 1-diphosphate + ATP. The protein operates within amino-acid biosynthesis; L-histidine biosynthesis; L-histidine from 5-phospho-alpha-D-ribose 1-diphosphate: step 1/9. Catalyzes the condensation of ATP and 5-phosphoribose 1-diphosphate to form N'-(5'-phosphoribosyl)-ATP (PR-ATP). Has a crucial role in the pathway because the rate of histidine biosynthesis seems to be controlled primarily by regulation of the enzymatic activity. This Kluyveromyces lactis (strain ATCC 8585 / CBS 2359 / DSM 70799 / NBRC 1267 / NRRL Y-1140 / WM37) (Yeast) protein is ATP phosphoribosyltransferase (HIS1).